The chain runs to 433 residues: GTPase Obg (433 aa).

Residues 4–162 enclose the Obg domain; sequence EDFVDRVTIF…RWLELELKLL (159 aa). Residues 163-334 enclose the OBG-type G domain; sequence ADAGLIGFPN…LKQKIFEIVG (172 aa). GTP-binding positions include 169 to 176, 194 to 198, 216 to 219, 286 to 289, and 315 to 317; these read GFPNVGKS, FTTLV, DIPG, NKID, and SAL. Residues serine 176 and threonine 196 each coordinate Mg(2+). In terms of domain architecture, OCT spans 356–433; that stretch reads TKIEERFDFE…IGQYSFEYKE (78 aa).

The protein belongs to the TRAFAC class OBG-HflX-like GTPase superfamily. OBG GTPase family. Monomer. Mg(2+) serves as cofactor.

The protein localises to the cytoplasm. Its function is as follows. An essential GTPase which binds GTP, GDP and possibly (p)ppGpp with moderate affinity, with high nucleotide exchange rates and a fairly low GTP hydrolysis rate. Plays a role in control of the cell cycle, stress response, ribosome biogenesis and in those bacteria that undergo differentiation, in morphogenesis control. The chain is GTPase Obg from Pseudothermotoga lettingae (strain ATCC BAA-301 / DSM 14385 / NBRC 107922 / TMO) (Thermotoga lettingae).